The chain runs to 150 residues: Endoribonuclease YbeY (150 aa).

Residues His102, His106, and His112 each coordinate Zn(2+).

It belongs to the endoribonuclease YbeY family. It depends on Zn(2+) as a cofactor.

Its subcellular location is the cytoplasm. Functionally, single strand-specific metallo-endoribonuclease involved in late-stage 70S ribosome quality control and in maturation of the 3' terminus of the 16S rRNA. The polypeptide is Endoribonuclease YbeY (Thermotoga sp. (strain RQ2)).